The sequence spans 481 residues: Deoxyribodipyrimidine photo-lyase (481 aa).

A Photolyase/cryptochrome alpha/beta domain is found at 1-136 (MQLFWHRRDL…AHAQFHDAVH (136 aa)). Tyr-228 lines the FAD pocket. Arg-232 is a binding site for DNA. Residue 240-244 (TSRLS) participates in FAD binding. 2 interaction with DNA regions span residues 283–290 (QLAWREFY) and 349–350 (NR). 380–382 (DHD) contacts FAD. Residue Gln-412 participates in DNA binding.

It belongs to the DNA photolyase class-1 family. In terms of assembly, monomer. The cofactor is FAD. Coenzyme F420-(gamma-Glu)n serves as cofactor.

The enzyme catalyses cyclobutadipyrimidine (in DNA) = 2 pyrimidine residues (in DNA).. In terms of biological role, involved in repair of UV radiation-induced DNA damage. Catalyzes the light-dependent monomerization (300-600 nm) of cyclobutyl pyrimidine dimers (in cis-syn configuration), which are formed between adjacent bases on the same DNA strand upon exposure to ultraviolet radiation. In Halobacterium salinarum (strain ATCC 700922 / JCM 11081 / NRC-1) (Halobacterium halobium), this protein is Deoxyribodipyrimidine photo-lyase (phr).